We begin with the raw amino-acid sequence, 670 residues long: Acetyl-coenzyme A synthetase (670 aa).

Residues 211-214 (RGGK) and Thr-329 each bind CoA. Residues 404 to 406 (GEP), 428 to 433 (DTYWQT), Asp-519, and Arg-534 each bind ATP. A CoA-binding site is contributed by Ser-542. Arg-545 contacts ATP. Position 603 (Arg-603) interacts with CoA.

It belongs to the ATP-dependent AMP-binding enzyme family.

The catalysed reaction is acetate + ATP + CoA = acetyl-CoA + AMP + diphosphate. The sequence is that of Acetyl-coenzyme A synthetase (facA) from Emericella nidulans (strain FGSC A4 / ATCC 38163 / CBS 112.46 / NRRL 194 / M139) (Aspergillus nidulans).